The sequence spans 58 residues: Large ribosomal subunit protein bL33 (58 aa).

It belongs to the bacterial ribosomal protein bL33 family.

The protein is Large ribosomal subunit protein bL33 of Brachyspira hyodysenteriae (strain ATCC 49526 / WA1).